We begin with the raw amino-acid sequence, 82 residues long: Sec-independent protein translocase protein TatA (82 aa).

The helical transmembrane segment at M1–G21 threads the bilayer.

This sequence belongs to the TatA/E family. In terms of assembly, the Tat system comprises two distinct complexes: a TatABC complex, containing multiple copies of TatA, TatB and TatC subunits, and a separate TatA complex, containing only TatA subunits. Substrates initially bind to the TatABC complex, which probably triggers association of the separate TatA complex to form the active translocon.

The protein resides in the cell inner membrane. Its function is as follows. Part of the twin-arginine translocation (Tat) system that transports large folded proteins containing a characteristic twin-arginine motif in their signal peptide across membranes. TatA could form the protein-conducting channel of the Tat system. In Vibrio cholerae serotype O1 (strain ATCC 39315 / El Tor Inaba N16961), this protein is Sec-independent protein translocase protein TatA.